The chain runs to 132 residues: Small ribosomal subunit protein uS8c (132 aa).

The protein belongs to the universal ribosomal protein uS8 family. In terms of assembly, part of the 30S ribosomal subunit.

The protein resides in the plastid. Its subcellular location is the chloroplast. One of the primary rRNA binding proteins, it binds directly to 16S rRNA central domain where it helps coordinate assembly of the platform of the 30S subunit. The chain is Small ribosomal subunit protein uS8c (rps8) from Phaeodactylum tricornutum (strain CCAP 1055/1).